Consider the following 258-residue polypeptide: 4-oxalmesaconate hydratase (258 aa).

Zn(2+) contacts are provided by H28, D31, and H141.

This sequence belongs to the MshB deacetylase family. Zn(2+) is required as a cofactor.

The enzyme catalyses 2-hydroxy-4-oxobutane-1,2,4-tricarboxylate = 4-carboxy-2-hydroxy-cis,cis-muconate + H2O. In terms of biological role, catalyzes the conversion of oxalomesaconic acid enol (OMAenol) to 4-carboxy-4-hydroxy-2-oxoadipic acid (CHA). Mediates the third step of gallate degradation pathway. This Pseudomonas putida (strain ATCC 47054 / DSM 6125 / CFBP 8728 / NCIMB 11950 / KT2440) protein is 4-oxalmesaconate hydratase (galB).